A 298-amino-acid polypeptide reads, in one-letter code: Specificity protein transcription factor 1 (298 aa).

The segment covering 206 to 218 has biased composition (low complexity); it reads VSSGSESVSARGT. Residues 206–233 form a disordered region; that stretch reads VSSGSESVSARGTSGSGGTGKYPSSRTA. Residues 260 to 284 form a C2H2-type zinc finger; the sequence is HNCHIAGCGKVYNKSSHLKAHLRWH.

This sequence belongs to the Sp1 C2H2-type zinc-finger protein family. Expressed in ASJ sensory neurons, pharyngeal cells, rectal cells, intestine, seam cells, and vulval cells.

Its function is as follows. Probable transcription factor which modulates gene expression, thereby acting as an ASJ sensory neuron terminal selector gene. This chain is Specificity protein transcription factor 1, found in Caenorhabditis elegans.